The following is a 101-amino-acid chain: Small ribosomal subunit protein uS14A (101 aa).

Residues 29–60 (EIIRSPRSTPEQRTAAQNELAHQPRDASAVRV) form a disordered region. The segment covering 34–45 (PRSTPEQRTAAQ) has biased composition (polar residues).

It belongs to the universal ribosomal protein uS14 family. In terms of assembly, part of the 30S ribosomal subunit. Contacts proteins S3 and S10.

In terms of biological role, binds 16S rRNA, required for the assembly of 30S particles and may also be responsible for determining the conformation of the 16S rRNA at the A site. The polypeptide is Small ribosomal subunit protein uS14A (Mycolicibacterium paratuberculosis (strain ATCC BAA-968 / K-10) (Mycobacterium paratuberculosis)).